The following is a 117-amino-acid chain: Large ribosomal subunit protein bL19 (117 aa).

This sequence belongs to the bacterial ribosomal protein bL19 family.

This protein is located at the 30S-50S ribosomal subunit interface and may play a role in the structure and function of the aminoacyl-tRNA binding site. This chain is Large ribosomal subunit protein bL19, found in Methylibium petroleiphilum (strain ATCC BAA-1232 / LMG 22953 / PM1).